The primary structure comprises 382 residues: Na(+)/H(+) antiporter NhaA 1 (382 aa).

The next 11 helical transmembrane spans lie at 10–30 (EFSIPLISGVIVALVWANISP), 45–65 (FSFHFIVNDFFMVLFFGIAAA), 87–107 (LLATIGGVVGPVLVYVVLNAL), 116–136 (GWGIPTATDIALAWLVASLVF), 145–165 (FLLLLAIADDAIGLAIIALFY), 170–190 (LPAAPQWLVLVLSGMGAAALL), 211–231 (AGLFMAHLHPALALVFIVPFL), 252–272 (LASFEHEWKVMVDFGLFLFGL), 275–295 (AGVTFGSIGAATWLVLASLVI), 326–346 (LVGLIAGIGLTVALFVAGEAF), and 353–373 (GAAKMGALMSAGCAVLALAAG).

The protein belongs to the NhaA Na(+)/H(+) (TC 2.A.33) antiporter family.

The protein resides in the cell inner membrane. The enzyme catalyses Na(+)(in) + 2 H(+)(out) = Na(+)(out) + 2 H(+)(in). Functionally, na(+)/H(+) antiporter that extrudes sodium in exchange for external protons. The protein is Na(+)/H(+) antiporter NhaA 1 of Pelobacter propionicus (strain DSM 2379 / NBRC 103807 / OttBd1).